The following is an 877-amino-acid chain: Hopanoid transporter HpnN (877 aa).

At 1–16 the chain is on the cytoplasmic side; that stretch reads MVTSLIVRLVAWSVRR. Residues 17–37 form a helical membrane-spanning segment; that stretch reads PVWVVVLSLLIAAFSGVYVAR. The Periplasmic portion of the chain corresponds to 38–279; sequence HFKINTDISK…FSSVEDGAAL (242 aa). A helical membrane pass occupies residues 280–295; that stretch reads NGVVTLLVVFVILWLA. At 296–299 the chain is on the cytoplasmic side; sequence LRSK. A helical transmembrane segment spans residues 300-323; it reads RMIASVLVTLFVGLVVTAALGLAM. The 127-residue stretch at 302–428 folds into the SSD domain; that stretch reads IASVLVTLFV…LTLLPALLRL (127 aa). At 324–332 the chain is on the periplasmic side; sequence VGSLNMISV. Residues 333-351 form a helical membrane-spanning segment; it reads AFMVLFVGLGVDFSIQYGV. Residues 352–373 are Cytoplasmic-facing; that stretch reads KYREERFRDERIDHALIGAAHS. The chain crosses the membrane as a helical span at residues 374–394; the sequence is MGMPLALATTAVAASFFSFIP. Over 395–399 the chain is Periplasmic; the sequence is TAYRG. The chain crosses the membrane as a helical span at residues 400 to 426; sequence VSELGLIAGVGMFVALLTTLTLLPALL. At 427-452 the chain is on the cytoplasmic side; it reads RLFAPPGESKTPGFPWLAPVDDYLDR. A helical transmembrane segment spans residues 453–472; that stretch reads HRKPILIGTLAVVIGALPLL. The Periplasmic segment spans residues 473 to 718; sequence AFLHFDFNPL…ILHSANTIIS (246 aa). Residues 719–739 form a helical membrane-spanning segment; it reads AFLHAALWSIISITILLWITL. Topologically, residues 740–743 are cytoplasmic; sequence RRFG. A helical membrane pass occupies residues 744–766; it reads DVLRTLVPLLVSGIVTLEMCVVL. Over 767–774 the chain is Periplasmic; that stretch reads GMSLNFAN. The helical transmembrane segment at 775–794 threads the bilayer; that stretch reads IIALPLMLGVGVAFKVYFVM. At 795-809 the chain is on the cytoplasmic side; it reads AWRAGQTGLLHSSLT. The helical transmembrane segment at 810 to 827 threads the bilayer; the sequence is HAVLFSAATTATAFGSLW. Over 828 to 836 the chain is Periplasmic; the sequence is LSHHPGTSS. The chain crosses the membrane as a helical span at residues 837–858; sequence MGKLLALALTCTLIGAVVFQPV. At 859–877 the chain is on the cytoplasmic side; it reads LMGKPRVKRAKNQSQGINE.

It belongs to the resistance-nodulation-cell division (RND) (TC 2.A.6) family. MmpL subfamily. Homodimer.

It is found in the cell inner membrane. Essential for hopanoid transport from the cytoplasmic to the outer membrane. Is capable of shuttling hopanoid lipids from the inner membrane to the periplasm, where they probably spontaneously insert to the inner leaflet of the outer membrane, strengthening the cell envelope. May be a proton-motive-force (PMF)-dependent transporter. Is critical for multidrug resistance and cell wall remodeling in Burkholderia. The polypeptide is Hopanoid transporter HpnN (Burkholderia multivorans (strain ATCC 17616 / 249)).